Consider the following 273-residue polypeptide: Putative pyruvate, phosphate dikinase regulatory protein (273 aa).

153–160 (GVSRTSKT) contacts ADP.

It belongs to the pyruvate, phosphate/water dikinase regulatory protein family. PDRP subfamily.

The catalysed reaction is N(tele)-phospho-L-histidyl/L-threonyl-[pyruvate, phosphate dikinase] + ADP = N(tele)-phospho-L-histidyl/O-phospho-L-threonyl-[pyruvate, phosphate dikinase] + AMP + H(+). It catalyses the reaction N(tele)-phospho-L-histidyl/O-phospho-L-threonyl-[pyruvate, phosphate dikinase] + phosphate + H(+) = N(tele)-phospho-L-histidyl/L-threonyl-[pyruvate, phosphate dikinase] + diphosphate. Its function is as follows. Bifunctional serine/threonine kinase and phosphorylase involved in the regulation of the pyruvate, phosphate dikinase (PPDK) by catalyzing its phosphorylation/dephosphorylation. This is Putative pyruvate, phosphate dikinase regulatory protein from Sinorhizobium medicae (strain WSM419) (Ensifer medicae).